We begin with the raw amino-acid sequence, 434 residues long: 4-hydroxyphenylpyruvate dioxygenase (434 aa).

Positions 1–21 are disordered; sequence MPPTPTTPAATGAAAAVTPEH. A compositionally biased stretch (low complexity) spans 7 to 19; sequence TPAATGAAAAVTP. VOC domains follow at residues 41-192 and 208-368; these read SFHH…FLPG and RFDH…IFTK. Fe cation is bound by residues His211, His293, and Glu379.

Belongs to the 4HPPD family. The cofactor is Fe cation.

The protein resides in the cytoplasm. It carries out the reaction 3-(4-hydroxyphenyl)pyruvate + O2 = homogentisate + CO2. It functions in the pathway amino-acid degradation; L-phenylalanine degradation; acetoacetate and fumarate from L-phenylalanine: step 3/6. It participates in cofactor biosynthesis; prenylquinone biosynthesis. The protein is 4-hydroxyphenylpyruvate dioxygenase of Hordeum vulgare (Barley).